A 245-amino-acid chain; its full sequence is uncharacterized protein (245 aa).

Residues 33–176 (QRAAYQQVQA…SSQRDMLTAT (144 aa)) are a coiled coil.

This is an uncharacterized protein from Mycobacterium tuberculosis (strain CDC 1551 / Oshkosh).